Reading from the N-terminus, the 209-residue chain is Putative 3-methyladenine DNA glycosylase (209 aa).

The disordered stretch occupies residues 189–209 (YISKTQPGPPPKKRKKGLESS). The span at 199 to 209 (PKKRKKGLESS) shows a compositional bias: basic residues.

Belongs to the DNA glycosylase MPG family.

In Chlorobaculum tepidum (strain ATCC 49652 / DSM 12025 / NBRC 103806 / TLS) (Chlorobium tepidum), this protein is Putative 3-methyladenine DNA glycosylase.